A 282-amino-acid polypeptide reads, in one-letter code: Glutamyl endopeptidase (282 aa).

A signal peptide spans M1 to A27. A propeptide spanning residues K28 to S66 is cleaved from the precursor. Catalysis depends on charge relay system residues H117, D159, and S235.

This sequence belongs to the peptidase S1B family. In terms of assembly, monomer.

Its subcellular location is the secreted. It catalyses the reaction Preferential cleavage: Glu-|-Xaa, Asp-|-Xaa.. Inhibited by diisopropyl fluorophosphate. Its function is as follows. Exhibits a significant hydrolytic activity for the carbonyl side of glutamic acid. Shows activity toward human fibronectin and type 1 collagen. This is Glutamyl endopeptidase (gseA) from Staphylococcus epidermidis.